Here is a 911-residue protein sequence, read N- to C-terminus: Facilitated trehalose transporter Tret1 (911 aa).

Positions 1–256 are disordered; that stretch reads MSGRDNRGAG…RIGFQQQKAT (256 aa). The Cytoplasmic portion of the chain corresponds to 1-446; that stretch reads MSGRDNRGAG…VYRPTTNPIY (446 aa). A compositionally biased stretch (gly residues) spans 8-19; the sequence is GAGGGGGGGGGG. A compositionally biased stretch (basic and acidic residues) spans 32-50; the sequence is KLKEKLTRAGEELGYHRVE. 3 stretches are compositionally biased toward low complexity: residues 51-64, 76-129, and 156-166; these read SNLSTSNTGTSLDT, AAPQ…QQLR, and QQIHVQQQQQQ. Phosphoserine is present on residues Ser-302, Ser-303, and Ser-304. A disordered region spans residues 334 to 355; that stretch reads VLQGSSTDSDEEGDDAEHKRLI. 2 positions are modified to phosphoserine: Ser-374 and Ser-376. The tract at residues 380–402 is disordered; that stretch reads FLTSRQNFQQQRSISTDSRKSRR. A compositionally biased stretch (polar residues) spans 384–395; it reads RQNFQQQRSIST. The chain crosses the membrane as a helical span at residues 447–467; it reads IWTQVLAALSVSLGSLVVGFA. Residues 468 to 494 lie on the Extracellular side of the membrane; it reads SAYTSPALVSMTNTNLTSFVVTPQAAS. The N-linked (GlcNAc...) asparagine glycan is linked to Asn-482. A helical transmembrane segment spans residues 495–515; sequence WVGGIMPLAGLAGGIAGGPFI. At 516-527 the chain is on the cytoplasmic side; sequence EYLGRRNTILAT. The chain crosses the membrane as a helical span at residues 528–548; that stretch reads AVPFIVSWLLIACAVNVIMVL. Topologically, residues 549 to 551 are extracellular; sequence CGR. The chain crosses the membrane as a helical span at residues 552–572; that stretch reads FLAGFCVGIASLSLPVYLGET. The Cytoplasmic segment spans residues 573-578; it reads VQPEVR. The chain crosses the membrane as a helical span at residues 579-599; that stretch reads GTLGLLPTAFGNIGILLCFVA. Topologically, residues 600–606 are extracellular; it reads GTYMDWS. A helical membrane pass occupies residues 607-627; that stretch reads MLAFLGASLPVPFLILMFLIP. Topologically, residues 628-690 are cytoplasmic; that stretch reads ETPRWYVSRG…ELLKRSNLKP (63 aa). Residues 691–711 traverse the membrane as a helical segment; that stretch reads LSISLGLMFFQQLSGINAVIF. Over 712–727 the chain is Extracellular; the sequence is YTVQIFQDAGSTIDGN. A helical transmembrane segment spans residues 728-748; the sequence is VCTIIVGVVNFAATFIATILI. Residues 749 to 754 are Cytoplasmic-facing; that stretch reads DRAGRK. A helical membrane pass occupies residues 755-775; that stretch reads VLLYVSNVMMVLTLFVLGGFF. Residues 776-794 are Extracellular-facing; sequence YCKSSGMDTSNVGWLPLSC. Residues 795–815 traverse the membrane as a helical segment; it reads FVIYILGFSLGFGPIPWLMMG. The Cytoplasmic portion of the chain corresponds to 816-821; that stretch reads EILPAK. A helical membrane pass occupies residues 822–842; it reads IRGSAASVATAFNWSCTFVVT. The Extracellular portion of the chain corresponds to 843 to 855; sequence KSFQDMIDFMGAH. A helical transmembrane segment spans residues 856–876; that stretch reads GAFWMFGAICFIGLFFVIFYV. Topologically, residues 877–911 are cytoplasmic; sequence PETQGKTLEDIERKMMGRVRRMSSVANIKPLSFNM. 2 positions are modified to phosphoserine: Ser-899 and Ser-900.

This sequence belongs to the major facilitator superfamily. Sugar transporter (TC 2.A.1.1) family. Trehalose transporter subfamily.

The protein localises to the cell membrane. Functionally, low-capacity facilitative transporter for trehalose. Does not transport maltose, sucrose or lactose. Mediates the bidirectional transfer of trehalose. Responsible for the transport of trehalose synthesized in the fat body and the incorporation of trehalose into other tissues that require a carbon source, thereby regulating trehalose levels in the hemolymph. The sequence is that of Facilitated trehalose transporter Tret1 from Drosophila virilis (Fruit fly).